A 157-amino-acid polypeptide reads, in one-letter code: S-ribosylhomocysteine lyase (157 aa).

Fe cation contacts are provided by His-54, His-58, and Cys-126.

It belongs to the LuxS family. In terms of assembly, homodimer. Requires Fe cation as cofactor.

It carries out the reaction S-(5-deoxy-D-ribos-5-yl)-L-homocysteine = (S)-4,5-dihydroxypentane-2,3-dione + L-homocysteine. Functionally, involved in the synthesis of autoinducer 2 (AI-2) which is secreted by bacteria and is used to communicate both the cell density and the metabolic potential of the environment. The regulation of gene expression in response to changes in cell density is called quorum sensing. Catalyzes the transformation of S-ribosylhomocysteine (RHC) to homocysteine (HC) and 4,5-dihydroxy-2,3-pentadione (DPD). This Bacillus cereus (strain 03BB102) protein is S-ribosylhomocysteine lyase.